A 567-amino-acid chain; its full sequence is MEFIIGLIVILLALFSVGYFLRKNIYKEIDRLEAWKIEILNRSIVEEISKIKHLKMTGETEQFFERWRAEWDDIVTAHLPKVEELLYDAEEYSDKYRFSKAKQVLTHIEDLLSAADSNIEDILKEIADLVTSEEQNRKDIEKVKEQYQTVRKNLLAYSHLYGTLYDKMEQDLDEAWEGIKQYEEETENGNYMKARKILLEQDRRLDQLQLYINDVPKLIADCKQTVPGQLTKLKDGYQEMSEKGYKLEHIQITKELETLNKQLARAEKLLIDELNLEEASSILQMIDDAIETLYDQLEAEVEAGQEIKSRMPELTEAFEKLEQDHTQTKAETALVKESYKLTAGELDQQKAFEKRLEEIEKLMKQIREKLDRDHVAYSLLMDEINQLETFIEDAKALHDTFKGHLQSLRKEELQARETLAELKTMLTDTVRQLHKSNIPGVPAEMKERAEKAQEMIHQVHEQLENLPLNMPAVNQQLKEASDTVRNVVDETEEMLSKVDQIERIIQYGNRFRSQNHILSEQLKEAERRFYAYDYNGSFDIAAAAVEKASPGAVQKLLAQQEKEYQHQ.

Residues 1 to 2 (ME) lie on the Extracellular side of the membrane. A helical transmembrane segment spans residues 3-21 (FIIGLIVILLALFSVGYFL). The Cytoplasmic segment spans residues 22-567 (RKNIYKEIDR…AQQEKEYQHQ (546 aa)). Coiled-coil stretches lie at residues 108–185 (IEDL…YEEE), 243–375 (KGYK…RDHV), and 402–529 (KGHL…ERRF).

This sequence belongs to the EzrA family.

Its subcellular location is the cell membrane. In terms of biological role, negative regulator of FtsZ ring formation; modulates the frequency and position of FtsZ ring formation. Inhibits FtsZ ring formation at polar sites. Interacts either with FtsZ or with one of its binding partners to promote depolymerization. This Bacillus pumilus (strain SAFR-032) protein is Septation ring formation regulator EzrA.